A 126-amino-acid chain; its full sequence is Small ribosomal subunit protein eS6 (126 aa).

This sequence belongs to the eukaryotic ribosomal protein eS6 family.

In Thermococcus sibiricus (strain DSM 12597 / MM 739), this protein is Small ribosomal subunit protein eS6.